The following is a 251-amino-acid chain: Transcriptional cofactor Bfc (251 aa).

As to quaternary structure, interacts with srp (via GATA-type Zn-finger domain); this interaction enhances srp binding to the promoter of crq/croquemort.

The protein localises to the nucleus. Transcriptional cofactor involved in efferocytosis. Together with srp mediates expression of the phagocytic receptor crq/croquemort in response to apoptotic cells, and is up-regulated by crq/croquemort in a positive feedback mechanism. Involved in macrophage engulfment and clearance of apoptotic cells during embryogenesis. This Drosophila melanogaster (Fruit fly) protein is Transcriptional cofactor Bfc.